The following is a 363-amino-acid chain: MIIDTTEIETINSFSKLESLKEVYGIIWMLVPIVTLVLGITIGVLVIVWLEREISAGIQQRIGPEYAGPLGILQALADGTKLLLKENLIPSTGDTRLFSIGPSIAVISIFLSYSVIPFGDHLVLADLSIGVFFWIAISSIAPVGLLMSGYGSNNKYSFLGGLRAAAQSISYEIPLALCVLSISLLSNSLSTVDIVEAQSKYGFWGWNLWRQPIGFIVFLISSLAECERLPFDLPEAEEELVAGYQTEYSGIKFGLFYIASYLNLLVSSLFVTVLYLGGWNLSIPYIFVPDIFGINKGGKVFGTLIGIFITLAKTYLFLFIPIATRWTLPRLRMDQLLNLGWKFLLPISLGNLLLTTSSQLLSL.

The next 8 helical transmembrane spans lie at 30-50 (LVPI…IVWL), 98-118 (FSIG…VIPF), 127-147 (LSIG…GLLM), 165-185 (AAQS…ISLL), 203-223 (FWGW…ISSL), 248-268 (YSGI…LVSS), 300-320 (VFGT…FLFI), and 336-356 (LLNL…LLTT).

Belongs to the complex I subunit 1 family. NDH is composed of at least 16 different subunits, 5 of which are encoded in the nucleus.

Its subcellular location is the plastid. It is found in the chloroplast thylakoid membrane. The catalysed reaction is a plastoquinone + NADH + (n+1) H(+)(in) = a plastoquinol + NAD(+) + n H(+)(out). It catalyses the reaction a plastoquinone + NADPH + (n+1) H(+)(in) = a plastoquinol + NADP(+) + n H(+)(out). Functionally, NDH shuttles electrons from NAD(P)H:plastoquinone, via FMN and iron-sulfur (Fe-S) centers, to quinones in the photosynthetic chain and possibly in a chloroplast respiratory chain. The immediate electron acceptor for the enzyme in this species is believed to be plastoquinone. Couples the redox reaction to proton translocation, and thus conserves the redox energy in a proton gradient. This chain is NAD(P)H-quinone oxidoreductase subunit 1, chloroplastic, found in Solanum lycopersicum (Tomato).